The primary structure comprises 180 residues: Adenine phosphoribosyltransferase (180 aa).

Belongs to the purine/pyrimidine phosphoribosyltransferase family. In terms of assembly, homodimer.

Its subcellular location is the cytoplasm. The enzyme catalyses AMP + diphosphate = 5-phospho-alpha-D-ribose 1-diphosphate + adenine. Its pathway is purine metabolism; AMP biosynthesis via salvage pathway; AMP from adenine: step 1/1. Its function is as follows. Catalyzes a salvage reaction resulting in the formation of AMP, that is energically less costly than de novo synthesis. This chain is Adenine phosphoribosyltransferase, found in Rhizobium johnstonii (strain DSM 114642 / LMG 32736 / 3841) (Rhizobium leguminosarum bv. viciae).